The following is a 529-amino-acid chain: Biotin-dependent 3-methylcrotonyl-coenzyme A carboxylase beta1 subunit (529 aa).

The CoA carboxyltransferase N-terminal domain occupies 16–272 (HRRLVAELNN…CEPAQWDVRR (257 aa)). The region spanning 275 to 521 (EPKYPQAELY…SLCAHAPLDQ (247 aa)) is the CoA carboxyltransferase C-terminal domain.

Belongs to the AccD/PCCB family. As to quaternary structure, the biotin-dependent acyl-CoA carboxylase complex is composed of AccA1, which contains the biotin carboxylase (BC) and biotin carboxyl carrier protein (BCCP) domains, and AccD1, which contains the carboxyl transferase (CT) domain. The AccA1/AccD1 complex forms a dodecamer.

It carries out the reaction 3-methylbut-2-enoyl-CoA + N(6)-carboxybiotinyl-L-lysyl-[protein] = 3-methyl-(2E)-glutaconyl-CoA + N(6)-biotinyl-L-lysyl-[protein]. The protein operates within amino-acid degradation; L-leucine degradation. In terms of biological role, component of a biotin-dependent acyl-CoA carboxylase complex. This subunit transfers the CO2 from carboxybiotin to the CoA ester substrate. When associated with the alpha1 subunit AccA1, is involved in branched amino-acid catabolism with methylcrotonyl coenzyme A as the substrate. Shows residual with propionyl-CoA and acetyl-CoA. The polypeptide is Biotin-dependent 3-methylcrotonyl-coenzyme A carboxylase beta1 subunit (Mycobacterium tuberculosis (strain ATCC 25618 / H37Rv)).